Here is a 317-residue protein sequence, read N- to C-terminus: Carbonic anhydrase 5B, mitochondrial (317 aa).

The N-terminal 33 residues, 1–33 (MAVMNHLRVILQVSSSTLPWRRCWVPRLVPRRS), are a transit peptide targeting the mitochondrion. Residues 37–296 (YTCTYRTRNR…LMNRTVRSSF (260 aa)) enclose the Alpha-carbonic anhydrase domain. Positions 130, 132, and 155 each coordinate Zn(2+). 235-236 (TT) provides a ligand contact to substrate.

The protein belongs to the alpha-carbonic anhydrase family. It depends on Zn(2+) as a cofactor. Expressed in the heart, liver, lung, kidney, testis, and skeletal muscle (at protein level).

It localises to the mitochondrion. It carries out the reaction hydrogencarbonate + H(+) = CO2 + H2O. In terms of biological role, mitochondrial carbonic anhydrase that catalyzes the reversible conversion of carbon dioxide to bicarbonate/HCO3. This Mus musculus (Mouse) protein is Carbonic anhydrase 5B, mitochondrial (Ca5b).